A 318-amino-acid chain; its full sequence is Deoxymugineic acid synthase 1 (318 aa).

Aspartate 48 lines the NADP(+) pocket. Tyrosine 53 serves as the catalytic Proton donor. Histidine 116 is a binding site for substrate. NADP(+) is bound by residues 162-163 (CN), glutamine 184, 262-270 (FDEARMREN), and 277-285 (ELTEEERQR).

This sequence belongs to the aldo/keto reductase family. Confined to cells participating in long distance transport (e.g. in the parts of pericycle cells adjacent to the protoxylem and metaxylem) in roots and to vascular bundles in shoots.

It carries out the reaction 2'-deoxymugineate + NAD(+) = 3''-deamino-3''-oxonicotianamine + NADH + H(+). It catalyses the reaction 2'-deoxymugineate + NADP(+) = 3''-deamino-3''-oxonicotianamine + NADPH + H(+). The protein operates within siderophore biosynthesis. Functionally, catalyzes the reduction of a 3''-keto intermediate during the biosynthesis of 2'-deoxymugineic acid (DMA) from L-Met. Involved in the formation of phytosiderophores (MAs) belonging to the mugineic acid family and required to acquire iron. The chain is Deoxymugineic acid synthase 1 from Oryza sativa subsp. japonica (Rice).